The following is a 154-amino-acid chain: Small ribosomal subunit protein bS6 (154 aa).

Positions 107–154 are disordered; it reads KSDDRERGFRGPKPPGRFESGRKRGYDDREEFRARAGGDDDDRGLDQE. Residues 125–154 show a composition bias toward basic and acidic residues; that stretch reads ESGRKRGYDDREEFRARAGGDDDDRGLDQE.

The protein belongs to the bacterial ribosomal protein bS6 family.

Binds together with bS18 to 16S ribosomal RNA. This is Small ribosomal subunit protein bS6 from Granulibacter bethesdensis (strain ATCC BAA-1260 / CGDNIH1).